Here is a 340-residue protein sequence, read N- to C-terminus: L-threonine 3-dehydrogenase (340 aa).

Cys-38 is a Zn(2+) binding site. Active-site charge relay system residues include Thr-40 and His-43. 6 residues coordinate Zn(2+): His-63, Glu-64, Cys-93, Cys-96, Cys-99, and Cys-107. Residues Ile-175, Asp-195, Arg-200, 261–263, and 285–286 each bind NAD(+); these read LGI and IY.

It belongs to the zinc-containing alcohol dehydrogenase family. Homotetramer. Zn(2+) is required as a cofactor.

Its subcellular location is the cytoplasm. The catalysed reaction is L-threonine + NAD(+) = (2S)-2-amino-3-oxobutanoate + NADH + H(+). It functions in the pathway amino-acid degradation; L-threonine degradation via oxydo-reductase pathway; glycine from L-threonine: step 1/2. Catalyzes the NAD(+)-dependent oxidation of L-threonine to 2-amino-3-ketobutyrate. The polypeptide is L-threonine 3-dehydrogenase (Xanthomonas euvesicatoria pv. vesicatoria (strain 85-10) (Xanthomonas campestris pv. vesicatoria)).